We begin with the raw amino-acid sequence, 318 residues long: tRNA dimethylallyltransferase (318 aa).

ATP is bound at residue 21–28 (GPTATGKS). 23–28 (TATGKS) is a binding site for substrate. The segment at 46–49 (DSMQ) is interaction with substrate tRNA.

It belongs to the IPP transferase family. Monomer. It depends on Mg(2+) as a cofactor.

The enzyme catalyses adenosine(37) in tRNA + dimethylallyl diphosphate = N(6)-dimethylallyladenosine(37) in tRNA + diphosphate. Catalyzes the transfer of a dimethylallyl group onto the adenine at position 37 in tRNAs that read codons beginning with uridine, leading to the formation of N6-(dimethylallyl)adenosine (i(6)A). The protein is tRNA dimethylallyltransferase of Acidothermus cellulolyticus (strain ATCC 43068 / DSM 8971 / 11B).